A 429-amino-acid chain; its full sequence is UPF0597 protein AHA_1619 (429 aa).

Belongs to the UPF0597 family.

This is UPF0597 protein AHA_1619 from Aeromonas hydrophila subsp. hydrophila (strain ATCC 7966 / DSM 30187 / BCRC 13018 / CCUG 14551 / JCM 1027 / KCTC 2358 / NCIMB 9240 / NCTC 8049).